Consider the following 171-residue polypeptide: S-ribosylhomocysteine lyase (171 aa).

Residues His54, His58, and Cys128 each coordinate Fe cation.

Belongs to the LuxS family. In terms of assembly, homodimer. Fe cation is required as a cofactor.

The catalysed reaction is S-(5-deoxy-D-ribos-5-yl)-L-homocysteine = (S)-4,5-dihydroxypentane-2,3-dione + L-homocysteine. Involved in the synthesis of autoinducer 2 (AI-2) which is secreted by bacteria and is used to communicate both the cell density and the metabolic potential of the environment. The regulation of gene expression in response to changes in cell density is called quorum sensing. Catalyzes the transformation of S-ribosylhomocysteine (RHC) to homocysteine (HC) and 4,5-dihydroxy-2,3-pentadione (DPD). The sequence is that of S-ribosylhomocysteine lyase from Yersinia enterocolitica serotype O:8 / biotype 1B (strain NCTC 13174 / 8081).